The chain runs to 592 residues: Aspartate--tRNA ligase (592 aa).

An L-aspartate-binding site is contributed by Glu-177. The segment at 201-204 (QIFK) is aspartate. Arg-223 lines the L-aspartate pocket. Residues 223–225 (RDE) and Gln-232 contribute to the ATP site. His-451 contributes to the L-aspartate binding site. Glu-485 serves as a coordination point for ATP. Residue Arg-492 participates in L-aspartate binding. Residue 537–540 (GLDR) coordinates ATP.

The protein belongs to the class-II aminoacyl-tRNA synthetase family. Type 1 subfamily. In terms of assembly, homodimer.

It is found in the cytoplasm. The enzyme catalyses tRNA(Asp) + L-aspartate + ATP = L-aspartyl-tRNA(Asp) + AMP + diphosphate. Catalyzes the attachment of L-aspartate to tRNA(Asp) in a two-step reaction: L-aspartate is first activated by ATP to form Asp-AMP and then transferred to the acceptor end of tRNA(Asp). This chain is Aspartate--tRNA ligase, found in Bacillus licheniformis (strain ATCC 14580 / DSM 13 / JCM 2505 / CCUG 7422 / NBRC 12200 / NCIMB 9375 / NCTC 10341 / NRRL NRS-1264 / Gibson 46).